An 89-amino-acid polypeptide reads, in one-letter code: Neuropeptide F (89 aa).

The first 29 residues, 1–29, serve as a signal peptide directing secretion; sequence MASGTFTQRLLVALMIFALIADLSTLVAA. At phenylalanine 61 the chain carries Phenylalanine amide. A propeptide spanning residues 65–89 is cleaved from the precursor; that stretch reads GGYLNPAIFGQDEQEVDWQDSTFSR.

Belongs to the NPY family.

It is found in the secreted. Functionally, an integral part of the sensory system that mediates food signaling, providing the neural basis for the regulation of food response; coordinates larval foraging and social behavior changes during development. May have a hormonal role in females. This chain is Neuropeptide F, found in Anopheles gambiae (African malaria mosquito).